The following is a 1183-amino-acid chain: SRC kinase signaling inhibitor 1 (1183 aa).

Residues 1-44 are disordered; that stretch reads MGNAPSQDPERSSPPMLSADDAEYPREYRTLGGGGGGGSGGRRF. Phosphoserine is present on residues serine 13 and serine 18. Positions 31–41 are enriched in gly residues; that stretch reads LGGGGGGGSGG. Serine 45 carries the phosphoserine modification. The residue at position 52 (threonine 52) is a Phosphothreonine. Phosphoserine occurs at positions 53, 64, 143, 165, 169, 179, and 225. The residue at position 241 (tyrosine 241) is a Phosphotyrosine. Residues 284 to 379 are disordered; that stretch reads ASRESSPTRR…ERRDVKPDED (96 aa). Polar residues predominate over residues 286–296; sequence RESSPTRRLNN. The span at 297-306 shows a compositional bias: low complexity; it reads LSPAPHLASG. Phosphoserine occurs at positions 298, 307, and 324. The span at 313-331 shows a compositional bias: low complexity; sequence PSGLPSGLQSGSPSRSRLS. Residues arginine 329 and arginine 336 each carry the omega-N-methylarginine modification. Phosphoserine is present on residues serine 343, serine 362, and serine 364. Over residues 369-379 the composition is skewed to basic and acidic residues; that stretch reads LERRDVKPDED. Phosphotyrosine is present on tyrosine 396. The disordered stretch occupies residues 466 to 643; the sequence is YGFRLPPSSP…ASSTPAGQPT (178 aa). Over residues 485–497 the composition is skewed to pro residues; that stretch reads PGGPPPPHSPYSG. Phosphoserine occurs at positions 493, 496, and 500. Arginine 501 carries the post-translational modification Omega-N-methylarginine. Residues serine 503, serine 513, serine 515, serine 517, and serine 522 each carry the phosphoserine modification. Positions 524–541 are enriched in low complexity; sequence GGKTRSAGSASTAGAPPS. Basic and acidic residues predominate over residues 562–574; that stretch reads KDTETRERMEAME. A phosphoserine mark is found at serine 598 and serine 621. Phosphothreonine occurs at positions 624 and 637. Residues 634-643 show a composition bias toward low complexity; the sequence is ASSTPAGQPT. Residues 647-697 form an interaction with SNAP25 region; that stretch reads RLQMQLHLRGLQNSASDLRGQLQQLRKLQLQNQESVRALLKRTEAELSMRV. Coiled coils occupy residues 654–674 and 726–746; these read LRGL…LRKL and EELI…IQRD. Serine 844, serine 857, and serine 866 each carry phosphoserine. Disordered stretches follow at residues 861–907 and 949–1032; these read EMPP…KAVS and DCAS…VTSK. Threonine 884 is modified (phosphothreonine). Residue serine 987 is modified to Phosphoserine. Over residues 1002 to 1011 the composition is skewed to pro residues; sequence KSPPPPPPRR. 2 positions are modified to phosphoserine: serine 1043 and serine 1060. 2 disordered regions span residues 1058–1081 and 1105–1183; these read AVSE…DEDD and GASR…SISF. Polar residues predominate over residues 1135 to 1183; that stretch reads QAQQQATKPSKEMSGSNETSSPVSEKPSASRTSIPVLTSFGARNSSISF.

The protein belongs to the SRCIN1 family. In terms of assembly, interacts with the N-terminal coiled-coil region of SNAP25. Interacts with BCAR1/p130Cas and SRC through its C-terminal domain. Interacts with CSK, CTTN, SORBS3/vinexin, SYP and MAPRE3/EB3. In terms of processing, tyrosine-phosphorylated in response to EGF and to cell adhesion to integrin ligands. As to expression, expressed in some primary breast carcinomas where its presence is significantly associated with increased tumor size. Not detected in normal breast tissue.

The protein localises to the cytoplasm. The protein resides in the cytoskeleton. Its subcellular location is the cell projection. It is found in the axon. It localises to the dendrite. The protein localises to the presynapse. The protein resides in the postsynapse. Its subcellular location is the postsynaptic density. In terms of biological role, acts as a negative regulator of SRC by activating CSK which inhibits SRC activity and downstream signaling, leading to impaired cell spreading and migration. Regulates dendritic spine morphology. Involved in calcium-dependent exocytosis. May play a role in neurotransmitter release or synapse maintenance. The chain is SRC kinase signaling inhibitor 1 from Homo sapiens (Human).